We begin with the raw amino-acid sequence, 197 residues long: Mediator of RNA polymerase II transcription subunit 21 (197 aa).

The tract at residues 37-112 (PPPSVPSAVP…APPRPDSPNT (76 aa)) is disordered. 2 stretches are compositionally biased toward low complexity: residues 60-70 (PTSGTATNTPG) and 90-100 (PQMQQQHQEQP). Residues 140-183 (GIKSSEAEQQERIKQLAEELRVVEEERSARRRELRRLGEKVDGL) adopt a coiled-coil conformation.

It belongs to the Mediator complex subunit 21 family. In terms of assembly, component of the Mediator complex.

It localises to the nucleus. Component of the Mediator complex, a coactivator involved in the regulated transcription of nearly all RNA polymerase II-dependent genes. Mediator functions as a bridge to convey information from gene-specific regulatory proteins to the basal RNA polymerase II transcription machinery. Mediator is recruited to promoters by direct interactions with regulatory proteins and serves as a scaffold for the assembly of a functional preinitiation complex with RNA polymerase II and the general transcription factors. This chain is Mediator of RNA polymerase II transcription subunit 21 (SRB7), found in Coccidioides immitis (strain RS) (Valley fever fungus).